Reading from the N-terminus, the 328-residue chain is MKAFFAISASTLLATVHGHGYLTVPASRTRLGFEAGIDTCPECSILEPVDAWPNVTEAQVGRSGPCGYNARVSVDYNQPGDNWGNEPVVTYKAGDIVEVQWCVDNNGDHGGMFTYGICQDQELVDKFLDPDYLPTEEEKQAAEDCFLQGELKCGDVDGQECEYSPDCGEGEACYRNDWFTCNAFEADSDRGCQGVDGAELNSCKTTIAGGYTVTKKIKIPDYTSEHTLLRFRWNSFQTPQIYLHCADPTIEGGMEVRMRMIVMHGSFGVDTQHSFGHSFGFQGEGVYRAYRYIRGVAIIQMNLNINASLLPQPTLPIRGWSTRNIQHT.

Positions 1–18 are cleaved as a signal peptide; it reads MKAFFAISASTLLATVHG. Histidine 19 provides a ligand contact to Cu(2+). An intrachain disulfide couples cysteine 40 to cysteine 43. Asparagine 54 carries N-linked (GlcNAc...) asparagine glycosylation. Disulfide bonds link cysteine 66–cysteine 245, cysteine 102–cysteine 203, cysteine 118–cysteine 145, cysteine 153–cysteine 161, cysteine 167–cysteine 173, and cysteine 181–cysteine 192. Histidine 109 provides a ligand contact to Cu(2+). Tyrosine 242 is a binding site for Cu(2+). N-linked (GlcNAc...) asparagine glycosylation is present at asparagine 306.

This sequence belongs to the polysaccharide monooxygenase AA13 family. Cu(2+) is required as a cofactor.

The protein localises to the secreted. It catalyses the reaction starch + reduced acceptor + O2 = D-glucono-1,5-lactone-terminated malto-oligosaccharides + short-chain malto-oligosaccharides + acceptor + H2O.. Its function is as follows. Lytic polysaccharide monooxygenase involved in breakdown of granular resistant starch. This chain is Lytic polysaccharide monooxygenase aasB, found in Emericella nidulans (strain FGSC A4 / ATCC 38163 / CBS 112.46 / NRRL 194 / M139) (Aspergillus nidulans).